A 64-amino-acid polypeptide reads, in one-letter code: Temporin-ALd (64 aa).

The N-terminal stretch at 1–22 (MFTMKKSLLLLFFLGTIHLSLC) is a signal peptide. Residues 23-46 (EQERNAEEERRDDLGERQAEVEKR) constitute a propeptide that is removed on maturation. L62 is subject to Leucine amide.

In terms of tissue distribution, expressed by the skin glands.

Its subcellular location is the secreted. Its function is as follows. Antimicrobial peptide with activity against Gram-positive and Gram-negative bacteria and against fungi. Has been tested against S.aureus (MIC=1.25 ug/mL), B.pumilus (MIC=2.5 ug/mL), B.cereus (MIC=15.0 ug/mL), E.coli (MIC=1.25 ug/mL), B.dysenteriae (MIC=5.0 ug/mL), A.cacoaceticus (MIC=15.0 ug/mL), P.aeruginosa (MIC=5.0 ug/mL) and C.albicans (MIC=1.25 ug/mL). Also shows a weak hemolytic activity. This chain is Temporin-ALd, found in Amolops loloensis (Lolokou Sucker Frog).